Here is an 84-residue protein sequence, read N- to C-terminus: Small ribosomal subunit protein uS17 (84 aa).

It belongs to the universal ribosomal protein uS17 family. As to quaternary structure, part of the 30S ribosomal subunit.

One of the primary rRNA binding proteins, it binds specifically to the 5'-end of 16S ribosomal RNA. The polypeptide is Small ribosomal subunit protein uS17 (Salmonella typhi).